A 267-amino-acid polypeptide reads, in one-letter code: Cytochrome b (267 aa).

The next 4 helical transmembrane spans lie at 4–24, 48–69, 84–104, and 149–169; these read FGSL…LLAA, WLIR…YLHI, WNTG…GYVL, and FFTL…IHLT. Heme b contacts are provided by H54 and H68. Residues H153 and H167 each contribute to the heme b site. H172 serves as a coordination point for a ubiquinone. A run of 2 helical transmembrane segments spans residues 197–217 and 259–267; these read LKDI…ALFA and LGGVLALAA.

It belongs to the cytochrome b family. The cytochrome bc1 complex contains 11 subunits: 3 respiratory subunits (MT-CYB, CYC1 and UQCRFS1), 2 core proteins (UQCRC1 and UQCRC2) and 6 low-molecular weight proteins (UQCRH/QCR6, UQCRB/QCR7, UQCRQ/QCR8, UQCR10/QCR9, UQCR11/QCR10 and a cleavage product of UQCRFS1). This cytochrome bc1 complex then forms a dimer. It depends on heme b as a cofactor.

The protein resides in the mitochondrion inner membrane. In terms of biological role, component of the ubiquinol-cytochrome c reductase complex (complex III or cytochrome b-c1 complex) that is part of the mitochondrial respiratory chain. The b-c1 complex mediates electron transfer from ubiquinol to cytochrome c. Contributes to the generation of a proton gradient across the mitochondrial membrane that is then used for ATP synthesis. In Raphus cucullatus (Dodo), this protein is Cytochrome b (MT-CYB).